The following is a 416-amino-acid chain: UDP-N-acetylglucosamine 1-carboxyvinyltransferase (416 aa).

Residue 22–23 (KN) coordinates phosphoenolpyruvate. Arg92 contacts UDP-N-acetyl-alpha-D-glucosamine. The active-site Proton donor is the Cys116. Cys116 bears the 2-(S-cysteinyl)pyruvic acid O-phosphothioketal mark. UDP-N-acetyl-alpha-D-glucosamine-binding positions include 121-125 (RPVDQ), Asp304, and Ile326.

It belongs to the EPSP synthase family. MurA subfamily.

The protein localises to the cytoplasm. The enzyme catalyses phosphoenolpyruvate + UDP-N-acetyl-alpha-D-glucosamine = UDP-N-acetyl-3-O-(1-carboxyvinyl)-alpha-D-glucosamine + phosphate. Its pathway is cell wall biogenesis; peptidoglycan biosynthesis. In terms of biological role, cell wall formation. Adds enolpyruvyl to UDP-N-acetylglucosamine. This is UDP-N-acetylglucosamine 1-carboxyvinyltransferase from Cupriavidus taiwanensis (strain DSM 17343 / BCRC 17206 / CCUG 44338 / CIP 107171 / LMG 19424 / R1) (Ralstonia taiwanensis (strain LMG 19424)).